The primary structure comprises 432 residues: Pachytene checkpoint protein 2 homolog (432 aa).

An N-acetylmethionine modification is found at Met1. Gly179–Thr186 lines the ATP pocket.

This sequence belongs to the AAA ATPase family. PCH2 subfamily. As to quaternary structure, specifically interacts with the ligand binding domain of the thyroid receptor (TR). This interaction does not require the presence of thyroid hormone for its interaction. Interacts with proteasome subunit PSMA8; to participate in meiosis progression during spermatogenesis.

In terms of biological role, plays a key role in chromosome recombination and chromosome structure development during meiosis. Required at early steps in meiotic recombination that leads to non-crossovers pathways. Also needed for efficient completion of homologous synapsis by influencing crossover distribution along the chromosomes affecting both crossovers and non-crossovers pathways. Also required for development of higher-order chromosome structures and is needed for synaptonemal-complex formation. In males, required for efficient synapsis of the sex chromosomes and for sex body formation. Promotes early steps of the DNA double-strand breaks (DSBs) repair process upstream of the assembly of RAD51 complexes. Required for depletion of HORMAD1 and HORMAD2 from synapsed chromosomes. Plays a role in mitotic spindle assembly checkpoint (SAC) activation. This Rattus norvegicus (Rat) protein is Pachytene checkpoint protein 2 homolog (Trip13).